A 708-amino-acid chain; its full sequence is Polyribonucleotide nucleotidyltransferase (708 aa).

2 residues coordinate Mg(2+): Asp-486 and Asp-492. The KH domain occupies 553-612; the sequence is PRIIKFKINPEKIRDVIGKGGAVIRALTEETGTTIDISDDGSVTIACVSSEGGEQARKRI. The S1 motif domain occupies 622-690; the sequence is GRIYEGTVLK…EKGRLRLSMK (69 aa).

It belongs to the polyribonucleotide nucleotidyltransferase family. Mg(2+) is required as a cofactor.

The protein localises to the cytoplasm. The enzyme catalyses RNA(n+1) + phosphate = RNA(n) + a ribonucleoside 5'-diphosphate. In terms of biological role, involved in mRNA degradation. Catalyzes the phosphorolysis of single-stranded polyribonucleotides processively in the 3'- to 5'-direction. The protein is Polyribonucleotide nucleotidyltransferase of Nitrosomonas europaea (strain ATCC 19718 / CIP 103999 / KCTC 2705 / NBRC 14298).